Here is a 177-residue protein sequence, read N- to C-terminus: Protein PrsK (177 aa).

A signal peptide spans Met1–Ala21.

It is found in the fimbrium. In Escherichia coli, this protein is Protein PrsK (prsK).